The primary structure comprises 336 residues: PTS system glucitol/sorbitol-specific EIIB component (336 aa).

A PTS EIIB type-5 domain is found at 3–195; it reads KYNAIKIVKG…AVQSMITTIL (193 aa). Cysteine 75 acts as the Phosphocysteine intermediate; for EIIB activity in catalysis. Cysteine 75 carries the post-translational modification Phosphocysteine; by EIIA. Helical transmembrane passes span 194-214, 228-248, 250-270, 278-298, and 312-332; these read ILPF…SGFG, GIGL…ALLG, GAVI…KGTI, ALFA…LGLA, and VLYS…VASI.

It is found in the cell membrane. The enzyme catalyses D-sorbitol(out) + N(pros)-phospho-L-histidyl-[protein] = D-sorbitol 6-phosphate(in) + L-histidyl-[protein]. In terms of biological role, the phosphoenolpyruvate-dependent sugar phosphotransferase system (sugar PTS), a major carbohydrate active transport system, catalyzes the phosphorylation of incoming sugar substrates concomitantly with their translocation across the cell membrane. The enzyme II complex composed of SrlA, SrlB and SrlE is involved in glucitol/sorbitol transport. This chain is PTS system glucitol/sorbitol-specific EIIB component (srlE), found in Clostridium beijerinckii (strain ATCC 51743 / NCIMB 8052) (Clostridium acetobutylicum).